Consider the following 272-residue polypeptide: Protein STAY-GREEN 1, chloroplastic (272 aa).

A chloroplast-targeting transit peptide spans 1–50 (MGTLTTSLVVPSKLNNEQQSSIFIHKTRRKCKKNQSIVPVARLFGPAIFE). The segment at 201–222 (TSPSSSSGGVGGVKSTSFTSNS) is disordered.

It belongs to the staygreen family. Interacts with PSY1.

It localises to the plastid. Its subcellular location is the chloroplast. Its function is as follows. Required to trigger chlorophyll degradation during leaf senescence and fruit ripening. Binds directly PSY1 to regulate the accumulation of lycopene and beta-carotene in the maturing fruits. The polypeptide is Protein STAY-GREEN 1, chloroplastic (Solanum lycopersicum (Tomato)).